We begin with the raw amino-acid sequence, 264 residues long: Cytosolic Fe-S cluster assembly factor Nubp2 homolog (264 aa).

ATP is bound at residue 14 to 21; that stretch reads GKGGVGKS. [4Fe-4S] cluster is bound by residues Cys188 and Cys191.

The protein belongs to the Mrp/NBP35 ATP-binding proteins family. NUBP2/CFD1 subfamily. In terms of assembly, heterotetramer of 2 Nubp1 and 2 Nubp2 chains. It depends on [4Fe-4S] cluster as a cofactor.

Its subcellular location is the cytoplasm. In terms of biological role, component of the cytosolic iron-sulfur (Fe/S) protein assembly (CIA) machinery. Required for maturation of extramitochondrial Fe-S proteins. The Nubp1-Nubp2 heterotetramer forms a Fe-S scaffold complex, mediating the de novo assembly of an Fe-S cluster and its transfer to target apoproteins. The sequence is that of Cytosolic Fe-S cluster assembly factor Nubp2 homolog from Drosophila grimshawi (Hawaiian fruit fly).